The sequence spans 473 residues: 3-isopropylmalate dehydratase large subunit (473 aa).

Cys354, Cys414, and Cys417 together coordinate [4Fe-4S] cluster.

The protein belongs to the aconitase/IPM isomerase family. LeuC type 1 subfamily. As to quaternary structure, heterodimer of LeuC and LeuD. [4Fe-4S] cluster is required as a cofactor.

It catalyses the reaction (2R,3S)-3-isopropylmalate = (2S)-2-isopropylmalate. It participates in amino-acid biosynthesis; L-leucine biosynthesis; L-leucine from 3-methyl-2-oxobutanoate: step 2/4. In terms of biological role, catalyzes the isomerization between 2-isopropylmalate and 3-isopropylmalate, via the formation of 2-isopropylmaleate. The polypeptide is 3-isopropylmalate dehydratase large subunit (Mycobacterium marinum (strain ATCC BAA-535 / M)).